We begin with the raw amino-acid sequence, 119 residues long: Large ribosomal subunit protein uL24 (119 aa).

Belongs to the universal ribosomal protein uL24 family. As to quaternary structure, part of the 50S ribosomal subunit.

Its function is as follows. One of two assembly initiator proteins, it binds directly to the 5'-end of the 23S rRNA, where it nucleates assembly of the 50S subunit. Functionally, located at the polypeptide exit tunnel on the outside of the subunit. The protein is Large ribosomal subunit protein uL24 of Haloquadratum walsbyi (strain DSM 16790 / HBSQ001).